Consider the following 273-residue polypeptide: Nickel import ATP-binding protein NikE (273 aa).

Positions 13–252 (YRTGGLLRKR…AHPVGRQLQA (240 aa)) constitute an ABC transporter domain. Position 45-52 (45-52 (GSSGSGKS)) interacts with ATP.

The protein belongs to the ABC transporter superfamily. Nickel importer (TC 3.A.1.5.3) family. The complex is composed of two ATP-binding proteins (NikD and NikE), two transmembrane proteins (NikB and NikC) and a solute-binding protein (NikA).

Its subcellular location is the cell inner membrane. It carries out the reaction Ni(2+)(out) + ATP + H2O = Ni(2+)(in) + ADP + phosphate + H(+). Functionally, part of the ABC transporter complex NikABCDE involved in nickel import. Responsible for energy coupling to the transport system. This is Nickel import ATP-binding protein NikE from Pseudomonas putida (strain ATCC 47054 / DSM 6125 / CFBP 8728 / NCIMB 11950 / KT2440).